A 496-amino-acid polypeptide reads, in one-letter code: Glutamyl-tRNA(Gln) amidotransferase subunit B, organellar chromatophore (496 aa).

Belongs to the GatB/GatE family. GatB subfamily. As to quaternary structure, subunit of the heterotrimeric GatCAB amidotransferase (AdT) complex, composed of A, B and C subunits.

The protein localises to the plastid. Its subcellular location is the organellar chromatophore. The catalysed reaction is L-glutamyl-tRNA(Gln) + L-glutamine + ATP + H2O = L-glutaminyl-tRNA(Gln) + L-glutamate + ADP + phosphate + H(+). Allows the formation of correctly charged Gln-tRNA(Gln) through the transamidation of misacylated Glu-tRNA(Gln). The reaction takes place in the presence of glutamine and ATP through an activated gamma-phospho-Glu-tRNA(Gln). This chain is Glutamyl-tRNA(Gln) amidotransferase subunit B, organellar chromatophore, found in Paulinella chromatophora.